The following is a 468-amino-acid chain: Bifunctional protein GlmU (468 aa).

A pyrophosphorylase region spans residues 1–233; it reads MAQAGSASPL…LEEANLVNDR (233 aa). UDP-N-acetyl-alpha-D-glucosamine contacts are provided by residues 15–18, lysine 29, glutamine 79, and 84–85; these read LAAG and GT. Aspartate 109 is a binding site for Mg(2+). Residues glycine 146, glutamate 159, asparagine 174, and asparagine 231 each coordinate UDP-N-acetyl-alpha-D-glucosamine. Residue asparagine 231 coordinates Mg(2+). The segment at 234-254 is linker; it reads SQLARAEEILRRRILDAHMKE. The tract at residues 255–468 is N-acetyltransferase; sequence GVTVRDPVST…GDRRRARTEG (214 aa). Residues arginine 336 and lysine 354 each contribute to the UDP-N-acetyl-alpha-D-glucosamine site. Histidine 366 (proton acceptor) is an active-site residue. The UDP-N-acetyl-alpha-D-glucosamine site is built by tyrosine 369 and asparagine 380. Acetyl-CoA-binding positions include alanine 383, 389-390, and alanine 426; that span reads NY.

The protein in the N-terminal section; belongs to the N-acetylglucosamine-1-phosphate uridyltransferase family. It in the C-terminal section; belongs to the transferase hexapeptide repeat family. As to quaternary structure, homotrimer. It depends on Mg(2+) as a cofactor.

Its subcellular location is the cytoplasm. It carries out the reaction alpha-D-glucosamine 1-phosphate + acetyl-CoA = N-acetyl-alpha-D-glucosamine 1-phosphate + CoA + H(+). The enzyme catalyses N-acetyl-alpha-D-glucosamine 1-phosphate + UTP + H(+) = UDP-N-acetyl-alpha-D-glucosamine + diphosphate. Its pathway is nucleotide-sugar biosynthesis; UDP-N-acetyl-alpha-D-glucosamine biosynthesis; N-acetyl-alpha-D-glucosamine 1-phosphate from alpha-D-glucosamine 6-phosphate (route II): step 2/2. The protein operates within nucleotide-sugar biosynthesis; UDP-N-acetyl-alpha-D-glucosamine biosynthesis; UDP-N-acetyl-alpha-D-glucosamine from N-acetyl-alpha-D-glucosamine 1-phosphate: step 1/1. It functions in the pathway bacterial outer membrane biogenesis; LPS lipid A biosynthesis. Functionally, catalyzes the last two sequential reactions in the de novo biosynthetic pathway for UDP-N-acetylglucosamine (UDP-GlcNAc). The C-terminal domain catalyzes the transfer of acetyl group from acetyl coenzyme A to glucosamine-1-phosphate (GlcN-1-P) to produce N-acetylglucosamine-1-phosphate (GlcNAc-1-P), which is converted into UDP-GlcNAc by the transfer of uridine 5-monophosphate (from uridine 5-triphosphate), a reaction catalyzed by the N-terminal domain. The sequence is that of Bifunctional protein GlmU from Rubrobacter xylanophilus (strain DSM 9941 / JCM 11954 / NBRC 16129 / PRD-1).